The primary structure comprises 248 residues: Granulin (248 aa).

This sequence belongs to the polyhedrin family.

Component of the virus occlusion bodies, which are large proteinaceous structures, that protect the virus from the outside environment for extended periods until they are ingested by insect larvae. In Trichoplusia ni (Cabbage looper), this protein is Granulin.